A 277-amino-acid polypeptide reads, in one-letter code: Transport and Golgi organization protein 11 (277 aa).

Topologically, residues 1 to 256 (MVTPQSPTPM…NNEQRTQREK (256 aa)) are cytoplasmic. Disordered regions lie at residues 124 to 148 (HFPS…NDLD) and 167 to 200 (VARM…LNQQ). A phosphoserine mark is found at serine 127, serine 129, serine 132, and serine 133. The segment covering 174–200 (GNDTNSVESDSQLTTGSASKRSQLNQQ) has biased composition (polar residues). A Phosphothreonine modification is found at threonine 177. 3 positions are modified to phosphoserine: serine 179, serine 182, and serine 190. Phosphothreonine occurs at positions 216 and 222. Residues 225 to 253 (EEILYLRRQLAKLNRRVLNIEINNEQRTQ) adopt a coiled-coil conformation. A helical; Anchor for type IV membrane protein transmembrane segment spans residues 257–274 (IVYCLGLAYFVLKTIFWL). Topologically, residues 275-277 (NRN) are lumenal.

It belongs to the Tango11 family.

It localises to the endoplasmic reticulum membrane. The protein resides in the mitochondrion outer membrane. Its subcellular location is the peroxisome. In terms of biological role, may play a role in mitochondrial and peroxisomal fission. In Drosophila melanogaster (Fruit fly), this protein is Transport and Golgi organization protein 11 (Tango11).